Consider the following 79-residue polypeptide: Cytochrome b (79 aa).

The next 3 membrane-spanning stretches (helical) occupy residues 1-7 (TALFLAM), 31-52 (WLIR…YLHI), and 67-79 (WNVG…LTMM). Residues H37 and H51 each contribute to the heme b site.

This sequence belongs to the cytochrome b family. As to quaternary structure, the cytochrome bc1 complex contains 3 respiratory subunits (MT-CYB, CYC1 and UQCRFS1), 2 core proteins (UQCRC1 and UQCRC2) and probably 6 low-molecular weight proteins. The cofactor is heme b.

The protein resides in the mitochondrion inner membrane. Functionally, component of the ubiquinol-cytochrome c reductase complex (complex III or cytochrome b-c1 complex) that is part of the mitochondrial respiratory chain. The b-c1 complex mediates electron transfer from ubiquinol to cytochrome c. Contributes to the generation of a proton gradient across the mitochondrial membrane that is then used for ATP synthesis. This Amphilophus citrinellus (Midas cichlid) protein is Cytochrome b (mt-cyb).